A 255-amino-acid chain; its full sequence is 5-oxoprolinase subunit A (255 aa).

Belongs to the LamB/PxpA family. Forms a complex composed of PxpA, PxpB and PxpC.

The catalysed reaction is 5-oxo-L-proline + ATP + 2 H2O = L-glutamate + ADP + phosphate + H(+). Functionally, catalyzes the cleavage of 5-oxoproline to form L-glutamate coupled to the hydrolysis of ATP to ADP and inorganic phosphate. This Corynebacterium efficiens (strain DSM 44549 / YS-314 / AJ 12310 / JCM 11189 / NBRC 100395) protein is 5-oxoprolinase subunit A.